The sequence spans 383 residues: Large ribosomal subunit protein uL2m (383 aa).

2 disordered regions span residues 97 to 122 (FPKKGQSKGGRNHSGRVTVRHRGGGH) and 322 to 357 (MNANDHPHGGGRGKSKGNRHPVSPWGTPAKGGYKTR). Basic residues-rich tracts occupy residues 106–122 (GRNHSGRVTVRHRGGGH) and 330–340 (GGGRGKSKGNR).

The protein belongs to the universal ribosomal protein uL2 family. As to quaternary structure, component of the mitochondrial large ribosomal subunit (mt-LSU). Mature N.crassa 74S mitochondrial ribosomes consist of a small (37S) and a large (54S) subunit. The 37S small subunit contains a 16S ribosomal RNA (16S mt-rRNA) and 32 different proteins. The 54S large subunit contains a 23S rRNA (23S mt-rRNA) and 42 different proteins.

It localises to the mitochondrion. In terms of biological role, component of the mitochondrial ribosome (mitoribosome), a dedicated translation machinery responsible for the synthesis of mitochondrial genome-encoded proteins, including at least some of the essential transmembrane subunits of the mitochondrial respiratory chain. The mitoribosomes are attached to the mitochondrial inner membrane and translation products are cotranslationally integrated into the membrane. This is Large ribosomal subunit protein uL2m (rml2) from Neurospora crassa (strain ATCC 24698 / 74-OR23-1A / CBS 708.71 / DSM 1257 / FGSC 987).